A 377-amino-acid polypeptide reads, in one-letter code: UPF0754 membrane protein lin2327 (377 aa).

Helical transmembrane passes span 1–21 (MSVL…GAMT) and 357–377 (YLGG…AMWI).

Belongs to the UPF0754 family.

Its subcellular location is the cell membrane. The sequence is that of UPF0754 membrane protein lin2327 from Listeria innocua serovar 6a (strain ATCC BAA-680 / CLIP 11262).